Consider the following 146-residue polypeptide: Leghemoglobin Lb120-8 (146 aa).

The Globin domain maps to 2 to 146 (GFTEKQEALV…LASAIKKAMN (145 aa)). Nitrated tyrosine is present on residues Tyr24 and Tyr29. Ser44 contributes to the heme b binding site. Residue Ser44 is modified to Phosphoserine. His61 lines the O2 pocket. Lys64, His93, and Lys96 together coordinate heme b. Tyr134 carries the nitrated tyrosine modification.

The protein belongs to the plant globin family. As to quaternary structure, monomer. In terms of processing, nitrated in effective nodules and particularly in hypoxic conditions; this mechanism may play a protective role in the symbiosis by buffering toxic peroxynitrite NO(2)(-). Nitration level decrease during nodule senescence. Phosphorylation at Ser-44 disrupts the molecular environment of its porphyrin ring oxygen binding pocket, thus leading to a reduced oxygen consumption and to the delivery of oxygen O(2) to symbiosomes. Root nodules.

It localises to the cytoplasm. The protein resides in the cytosol. The protein localises to the nucleus. Its function is as follows. Leghemoglobin that reversibly binds oxygen O(2) through a pentacoordinated heme iron. In root nodules, facilitates the diffusion of oxygen to the bacteroids while preventing the bacterial nitrogenase from being inactivated by buffering dioxygen, nitric oxide and carbon monoxide, and promoting the formation of reactive oxygen species (ROS, e.g. H(2)O(2)). This role is essential for symbiotic nitrogen fixation (SNF). The polypeptide is Leghemoglobin Lb120-8 (Pisum sativum (Garden pea)).